Here is a 287-residue protein sequence, read N- to C-terminus: Festuclavine synthase I (287 aa).

The protein belongs to the fgaFS/easG family.

It carries out the reaction festuclavine + NAD(+) = 6,8-dimethyl-6,7-didehydroergoline + NADH + H(+). It functions in the pathway alkaloid biosynthesis; ergot alkaloid biosynthesis. Its function is as follows. Festuclavine synthase; part of the gene cluster that mediates the biosynthesis of isofumigaclavines, fungal ergot alkaloids. The tryptophan dimethylallyltransferase ifgA catalyzes the first step of ergot alkaloid biosynthesis by condensing dimethylallyl diphosphate (DMAP) and tryptophan to form 4-dimethylallyl-L-tryptophan. The second step is catalyzed by the methyltransferase ifgB that methylates 4-dimethylallyl-L-tryptophan in the presence of S-adenosyl-L-methionine, resulting in the formation of N-methyl-dimethylallyl-L-tryptophan. The catalase ifgD and the FAD-dependent oxidoreductase ifgC then transform N-methyl-dimethylallyl-L-tryptophan to chanoclavine-I which is further oxidized by ifgE in the presence of NAD(+), resulting in the formation of chanoclavine-I aldehyde. The chanoclavine-I aldehyde reductases ifgG and/or fgaOx3 reduce chanoclavine-I aldehyde to dihydrochanoclavine-I aldehyde that spontaneously dehydrates to form 6,8-dimethyl-6,7-didehydroergoline. The festuclavine dehydrogenases ifgF1 and/or ifgF2 then catalyze the reduction of 6,8-dimethyl-6,7-didehydroergoline to form festuclavine. Hydrolysis of festuclavine by a yet undetermined cytochrome P450 monooxygenase (called ifgH) then leads to the formation of isofumigaclavine B which is in turn acetylated by ifgI to isofumigaclavine A. Penicillium roqueforti has interestingly at least two sets of genes for the consumption of chanoclavine-I aldehyde on three different loci, the OYEs ifgG/fgaOx3 and the festuclavine synthase homologs ifgF1/ifgF2. The reason for the duplication of these genes is unclear, probably to ensure the conversion of chanoclavine-I aldehyde by differential gene expression under various environmental conditions. This is Festuclavine synthase I from Penicillium roqueforti (strain FM164).